Reading from the N-terminus, the 457-residue chain is Argininosuccinate lyase (457 aa).

It belongs to the lyase 1 family. Argininosuccinate lyase subfamily.

The protein localises to the cytoplasm. It catalyses the reaction 2-(N(omega)-L-arginino)succinate = fumarate + L-arginine. It participates in amino-acid biosynthesis; L-arginine biosynthesis; L-arginine from L-ornithine and carbamoyl phosphate: step 3/3. This is Argininosuccinate lyase from Shewanella sediminis (strain HAW-EB3).